A 378-amino-acid polypeptide reads, in one-letter code: Spermidine/putrescine import ATP-binding protein PotA (378 aa).

One can recognise an ABC transporter domain in the interval Val-18–Ile-248. Gly-50 to Thr-57 contacts ATP.

The protein belongs to the ABC transporter superfamily. Spermidine/putrescine importer (TC 3.A.1.11.1) family. As to quaternary structure, the complex is composed of two ATP-binding proteins (PotA), two transmembrane proteins (PotB and PotC) and a solute-binding protein (PotD).

The protein localises to the cell inner membrane. It catalyses the reaction ATP + H2O + polyamine-[polyamine-binding protein]Side 1 = ADP + phosphate + polyamineSide 2 + [polyamine-binding protein]Side 1.. Its function is as follows. Part of the ABC transporter complex PotABCD involved in spermidine/putrescine import. Responsible for energy coupling to the transport system. The polypeptide is Spermidine/putrescine import ATP-binding protein PotA (Salmonella choleraesuis (strain SC-B67)).